The chain runs to 204 residues: MPPKTKEKGTKAGAQKKKRNAGADVEAESMRRLALLEKEVLQDCLALQRDEARRAKASEDQLKQRIKDLEAELEGARSEGKAIYAEMSRQCRSLQEAMQSRSRQLEEEVEGLREQLELCQREAEAAQREAKQALGERDQTLAQFRAHVADMEAKYEEILHDSLDRLLAKLRDEASVGRGCAETPHQAQGAAPPVWTQPPGSLKL.

The span at 1–10 (MPPKTKEKGT) shows a compositional bias: basic and acidic residues. Positions 1 to 26 (MPPKTKEKGTKAGAQKKKRNAGADVE) are disordered. Residues 45–159 (LALQRDEARR…DMEAKYEEIL (115 aa)) adopt a coiled-coil conformation. The segment at 175–204 (SVGRGCAETPHQAQGAAPPVWTQPPGSLKL) is disordered.

Belongs to the DRC12 family. As to quaternary structure, component of the nexin-dynein regulatory complex (N-DRC).

Its subcellular location is the cytoplasm. The protein resides in the cytoskeleton. It localises to the flagellum axoneme. Its function is as follows. Component of the nexin-dynein regulatory complex (N-DRC), a key regulator of ciliary/flagellar motility which maintains the alignment and integrity of the distal axoneme and regulates microtubule sliding in motile axonemes. The protein is Dynein regulatory complex protein 12 (DRC12) of Bos taurus (Bovine).